The primary structure comprises 44 residues: Benzaldehyde dehydrogenase [NAD(+)] II (44 aa).

It belongs to the aldehyde dehydrogenase family.

It carries out the reaction benzaldehyde + NAD(+) + H2O = benzoate + NADH + 2 H(+). This chain is Benzaldehyde dehydrogenase [NAD(+)] II, found in Acinetobacter guillouiae (Acinetobacter genomosp. 11).